A 196-amino-acid chain; its full sequence is MLIAVEGIDGAGKTTIAAYIAELLKEKGYKVKVLKEPGDSKFGKKIKSSEERLSPEEELELFLKDREIDARENILPALQSGYAVVMDRYYFSNIAYQSARGIDARLIREMNEKIAPKPDLTILLDVEPEIALERVRKRGKLSPFEKLDYLRKVRKCFLENADETTVVVDASKPLEEVKEEVRKVIESFLNLKKNSN.

7-14 contacts ATP; it reads GIDGAGKT.

It belongs to the thymidylate kinase family.

The catalysed reaction is dTMP + ATP = dTDP + ADP. The chain is Probable thymidylate kinase (tmk) from Archaeoglobus fulgidus (strain ATCC 49558 / DSM 4304 / JCM 9628 / NBRC 100126 / VC-16).